A 310-amino-acid polypeptide reads, in one-letter code: Glycerol-3-phosphate dehydrogenase [NAD(P)+] (310 aa).

NADPH-binding residues include Trp19, Arg39, Arg40, and Lys87. Sn-glycerol 3-phosphate is bound by residues Lys87 and Gly115. An NADPH-binding site is contributed by Ser119. The sn-glycerol 3-phosphate site is built by Lys170, Asp223, Ser233, Arg234, and Asn235. Residue Lys170 is the Proton acceptor of the active site. An NADPH-binding site is contributed by Arg234. Glu260 lines the NADPH pocket.

It belongs to the NAD-dependent glycerol-3-phosphate dehydrogenase family.

It is found in the cytoplasm. It carries out the reaction sn-glycerol 3-phosphate + NAD(+) = dihydroxyacetone phosphate + NADH + H(+). The enzyme catalyses sn-glycerol 3-phosphate + NADP(+) = dihydroxyacetone phosphate + NADPH + H(+). It participates in membrane lipid metabolism; glycerophospholipid metabolism. Catalyzes the reduction of the glycolytic intermediate dihydroxyacetone phosphate (DHAP) to sn-glycerol 3-phosphate (G3P), the key precursor for phospholipid synthesis. The protein is Glycerol-3-phosphate dehydrogenase [NAD(P)+] of Synechococcus sp. (strain JA-3-3Ab) (Cyanobacteria bacterium Yellowstone A-Prime).